The chain runs to 194 residues: Probable nicotinate-nucleotide adenylyltransferase (194 aa).

It belongs to the NadD family.

The enzyme catalyses nicotinate beta-D-ribonucleotide + ATP + H(+) = deamido-NAD(+) + diphosphate. The protein operates within cofactor biosynthesis; NAD(+) biosynthesis; deamido-NAD(+) from nicotinate D-ribonucleotide: step 1/1. Its function is as follows. Catalyzes the reversible adenylation of nicotinate mononucleotide (NaMN) to nicotinic acid adenine dinucleotide (NaAD). This Christiangramia forsetii (strain DSM 17595 / CGMCC 1.15422 / KT0803) (Gramella forsetii) protein is Probable nicotinate-nucleotide adenylyltransferase.